We begin with the raw amino-acid sequence, 129 residues long: Protein UL131A (129 aa).

Positions 1–18 are cleaved as a signal peptide; it reads MRLCRVWLSVCLCAVVLG.

As to quaternary structure, forms the envelope pentamer complex (PC) composed of gH, gL, UL128, UL130, and UL131A. The pentamer interacts with host NRP2. The interaction with gH is important for the formation of UL128, UL130, gH-gL complex.

Its subcellular location is the virion membrane. Plays a role in viral entry into host cells. Forms a pentameric complex at the surface of the viral envelope together with gH, gL, UL130 and UL131. This complex is required for entry in epithelial, endothelial and myeloid host cells. Mechanistically, engages host receptor(s) including neurophilin 2/NRP2 to mediate infection. Contributes to the formation of the complex between UL128, UL130 and gH-gL. The sequence is that of Protein UL131A (UL131A) from Human cytomegalovirus (strain Merlin) (HHV-5).